Reading from the N-terminus, the 265-residue chain is Mlc titration factor A (265 aa).

Residues His-111, His-148, His-152, and Glu-211 each contribute to the Zn(2+) site.

It belongs to the MtfA family. Interacts with Mlc. Zn(2+) is required as a cofactor.

It is found in the cytoplasm. Its function is as follows. Involved in the modulation of the activity of the glucose-phosphotransferase system (glucose-PTS). Interacts with the transcriptional repressor Mlc, preventing its interaction with DNA and leading to the modulation of expression of genes regulated by Mlc, including ptsG, which encodes the PTS system glucose-specific EIICB component. Shows zinc-dependent metallopeptidase activity. This chain is Mlc titration factor A, found in Klebsiella pneumoniae (strain 342).